The primary structure comprises 508 residues: Photosystem II CP47 reaction center protein (508 aa).

The next 6 helical transmembrane spans lie at 21–36, 101–115, 140–156, 203–218, 237–252, and 457–472; these read SVHIMHTALVSGWAGS, IVFSGLCFLAAIWHW, GIHLFLAGVACFGFGAF, IAAGTLGILAGLFHLS, VLSSSIAAVFFAAFVV, and TFALLFFFGHIWHGAR.

The protein belongs to the PsbB/PsbC family. PsbB subfamily. As to quaternary structure, PSII is composed of 1 copy each of membrane proteins PsbA, PsbB, PsbC, PsbD, PsbE, PsbF, PsbH, PsbI, PsbJ, PsbK, PsbL, PsbM, PsbT, PsbX, PsbY, PsbZ, Psb30/Ycf12, at least 3 peripheral proteins of the oxygen-evolving complex and a large number of cofactors. It forms dimeric complexes. It depends on Binds multiple chlorophylls. PSII binds additional chlorophylls, carotenoids and specific lipids. as a cofactor.

It is found in the plastid. The protein resides in the chloroplast thylakoid membrane. In terms of biological role, one of the components of the core complex of photosystem II (PSII). It binds chlorophyll and helps catalyze the primary light-induced photochemical processes of PSII. PSII is a light-driven water:plastoquinone oxidoreductase, using light energy to abstract electrons from H(2)O, generating O(2) and a proton gradient subsequently used for ATP formation. In Oryza nivara (Indian wild rice), this protein is Photosystem II CP47 reaction center protein.